The primary structure comprises 509 residues: 3-ketoacyl-CoA synthase 11 (509 aa).

2 consecutive transmembrane segments (helical) span residues 36–56 (LITHGMYLFLSPLVLVIAAQI) and 75–95 (LISVVVCSMLLVFLMTIYFMT). In terms of domain architecture, FAE spans 92 to 381 (YFMTRPRPVY…FFATLVGRKL (290 aa)). Active-site residues include cysteine 236, histidine 315, histidine 399, histidine 403, and asparagine 436.

This sequence belongs to the thiolase-like superfamily. Chalcone/stilbene synthases family. Only expressed in guard cells. Expressed in siliques, flowers, leaves, stems, roots and seedlings.

It is found in the membrane. It carries out the reaction a very-long-chain acyl-CoA + malonyl-CoA + H(+) = a very-long-chain 3-oxoacyl-CoA + CO2 + CoA. It participates in lipid metabolism; fatty acid biosynthesis. Functionally, active on both saturated and mono-unsaturated acyl chains C16 to C20. This Arabidopsis thaliana (Mouse-ear cress) protein is 3-ketoacyl-CoA synthase 11.